Here is a 289-residue protein sequence, read N- to C-terminus: Rhodopsin (289 aa).

Over 1 to 7 (YLVNPAA) the chain is Extracellular. The helical transmembrane segment at 8–32 (YAALGAYMFLLILIGFPVNFLTLYV) threads the bilayer. At 33 to 44 (TLEHKKLRTPLN) the chain is on the cytoplasmic side. The chain crosses the membrane as a helical span at residues 45-67 (YILLNLAVADLFMVLGGFTTTMY). Topologically, residues 68–81 (TSMHGYFVLGRLGC) are extracellular. A disulfide bond links Cys-81 and Cys-158. The helical transmembrane segment at 82–104 (NLEGFFATLGGEIALWSLVVLAI) threads the bilayer. The short motif at 105–107 (ERW) is the 'Ionic lock' involved in activated form stabilization element. Over 105–123 (ERWIVVCKPISNFRFTEDH) the chain is Cytoplasmic. Residues 124 to 144 (AIMGLAFSWVMALSCSVPPLV) traverse the membrane as a helical segment. The Extracellular segment spans residues 145–173 (GWSRYIPEAMQCSCGVDYYTRAEGFNTES). Residues 174 to 195 (FVLYMFTVHFLIPLSVIFFCYG) traverse the membrane as a helical segment. The Cytoplasmic segment spans residues 196–223 (RLLCAVKEAAAAQQESETTQRSEKEVSR). Residues 224–245 (MVVLMVIGFLVCWLPYASTAWW) traverse the membrane as a helical segment. Residues 246-257 (IFCNQGSEFGPV) are Extracellular-facing. Residues 258–279 (FMTIPAFFAKSSAIYNPMIYIC) traverse the membrane as a helical segment. Residue Lys-267 is modified to N6-(retinylidene)lysine. Residues 280–289 (MNKQFRHCMI) lie on the Cytoplasmic side of the membrane.

The protein belongs to the G-protein coupled receptor 1 family. Opsin subfamily. Post-translationally, phosphorylated on some or all of the serine and threonine residues present in the C-terminal region. Contains one covalently linked retinal chromophore.

It localises to the membrane. Its subcellular location is the cell projection. The protein localises to the cilium. It is found in the photoreceptor outer segment. In terms of biological role, photoreceptor required for image-forming vision at low light intensity. While most salt water fish species use retinal as chromophore, most freshwater fish use 3-dehydroretinal, or a mixture of retinal and 3-dehydroretinal. Light-induced isomerization of 11-cis to all-trans retinal triggers a conformational change that activates signaling via G-proteins. Subsequent receptor phosphorylation mediates displacement of the bound G-protein alpha subunit by arrestin and terminates signaling. The sequence is that of Rhodopsin (rho) from Comephorus dybowskii.